Consider the following 309-residue polypeptide: Taste receptor type 2 member 124 (309 aa).

The Extracellular segment spans residues 1–7 (MVSVLHS). The chain crosses the membrane as a helical span at residues 8–28 (ISTIIIIAEFVWGNLSNGLIV). Topologically, residues 29-46 (LKNCLDWINIKELSTLDQ) are cytoplasmic. The helical transmembrane segment at 47-67 (ILILLAISRISLIWETLLMWV) threads the bilayer. The Extracellular portion of the chain corresponds to 68 to 81 (KDKLISSITIEELK). The helical transmembrane segment at 82–102 (MIMFSFMLSSHFSLWLATALS) threads the bilayer. Residues 103–127 (TFYLFRIANCSWQIFLYLKWRLKHL) lie on the Cytoplasmic side of the membrane. The chain crosses the membrane as a helical span at residues 128 to 148 (IVQMLLGSVMFLIANIIQITI). Residues 149–182 (TLEKRFYQYKGNTSVNSIQNEFALLIEMMLFNMT) lie on the Extracellular side of the membrane. 2 N-linked (GlcNAc...) asparagine glycosylation sites follow: Asn160 and Asn180. Residues 183 to 203 (IFSVIPFLLALISFFLLIFSL) form a helical membrane-spanning segment. Over 204–227 (WKHLQRMQLNSREDRDPSTKAHRN) the chain is Cytoplasmic. A helical membrane pass occupies residues 228–248 (ALGIMVSFLLLYTMYVLSLLI). The Extracellular portion of the chain corresponds to 249–261 (SWIAQKNQSELVH). Residue Asn255 is glycosylated (N-linked (GlcNAc...) asparagine). The helical transmembrane segment at 262 to 282 (IICMITSLLNPSVHSSILILG) threads the bilayer. Residues 283–309 (NFKLKQSSLCILRHLGCRLKSQNTPTT) lie on the Cytoplasmic side of the membrane.

Belongs to the G-protein coupled receptor T2R family.

The protein resides in the membrane. Putative taste receptor which may play a role in the perception of bitterness. The chain is Taste receptor type 2 member 124 from Rattus norvegicus (Rat).